Consider the following 1142-residue polypeptide: Zinc finger MYM-type protein 1 (1142 aa).

Residue lysine 25 forms a Glycyl lysine isopeptide (Lys-Gly) (interchain with G-Cter in SUMO2) linkage. MYM-type zinc fingers lie at residues 110–148 (QLFCSIPCITEYISSASSPVPSKRTCSNCSKDILNPKDV), 160–203 (KTFC…QYEV), and 210–245 (HNLCSNACLSKFHSANNFIMNCCENCGTYCYTSSSL). A Glycyl lysine isopeptide (Lys-Gly) (interchain with G-Cter in SUMO2) cross-link involves residue lysine 284. The MYM-type 4 zinc-finger motif lies at 300–331 (ELFCSINCFSAYSKAKMESSSVSVVSVVHDTS). Residues 385-396 (KSSPSEPSNAVA) show a composition bias toward polar residues. The tract at residues 385 to 413 (KSSPSEPSNAVASSSTEQPSVSPSSSVFS) is disordered. Over residues 397–413 (SSSTEQPSVSPSSSVFS) the composition is skewed to low complexity. Residues 452–538 (KSRSIKKSCC…YQFCDGAVSD (87 aa)) form a TTF-type zinc finger.

It localises to the nucleus. The chain is Zinc finger MYM-type protein 1 (ZMYM1) from Homo sapiens (Human).